The following is a 134-amino-acid chain: UPF0412 protein YaaI (134 aa).

The signal sequence occupies residues 1 to 23 (MKSVFTISASLAISLMLCCTAQA).

It belongs to the UPF0412 family.

The polypeptide is UPF0412 protein YaaI (Shigella dysenteriae serotype 1 (strain Sd197)).